A 198-amino-acid chain; its full sequence is Transcriptional regulator GfcR (198 aa).

The protein belongs to the purine/pyrimidine phosphoribosyltransferase family. GfcR subfamily.

The sequence is that of Transcriptional regulator GfcR from Methanosphaera stadtmanae (strain ATCC 43021 / DSM 3091 / JCM 11832 / MCB-3).